Consider the following 164-residue polypeptide: Mediator of RNA polymerase II transcription subunit 21 (164 aa).

The disordered stretch occupies residues 49–81 (APLPANQTQQGSTLGSNRQTVSPSTQAEAESNF). Positions 53-81 (ANQTQQGSTLGSNRQTVSPSTQAEAESNF) are enriched in polar residues. A coiled-coil region spans residues 114-146 (ESQLKIIDDLSKELQSVEQEQVKKIQEKDKLLK).

The protein belongs to the Mediator complex subunit 21 family. In terms of assembly, component of the Mediator complex.

It localises to the nucleus. Functionally, component of the Mediator complex, a coactivator involved in the regulated transcription of nearly all RNA polymerase II-dependent genes. Mediator functions as a bridge to convey information from gene-specific regulatory proteins to the basal RNA polymerase II transcription machinery. Mediator is recruited to promoters by direct interactions with regulatory proteins and serves as a scaffold for the assembly of a functional preinitiation complex with RNA polymerase II and the general transcription factors. The sequence is that of Mediator of RNA polymerase II transcription subunit 21 (SRB7) from Scheffersomyces stipitis (strain ATCC 58785 / CBS 6054 / NBRC 10063 / NRRL Y-11545) (Yeast).